Here is a 334-residue protein sequence, read N- to C-terminus: Beta-ketoacyl-[acyl-carrier-protein] synthase III (334 aa).

Catalysis depends on residues cysteine 114 and histidine 260. An ACP-binding region spans residues 261 to 265 (QANLR). Asparagine 290 is a catalytic residue.

It belongs to the thiolase-like superfamily. FabH family. Homodimer.

It is found in the cytoplasm. The enzyme catalyses malonyl-[ACP] + acetyl-CoA + H(+) = 3-oxobutanoyl-[ACP] + CO2 + CoA. It participates in lipid metabolism; fatty acid biosynthesis. In terms of biological role, catalyzes the condensation reaction of fatty acid synthesis by the addition to an acyl acceptor of two carbons from malonyl-ACP. Catalyzes the first condensation reaction which initiates fatty acid synthesis and may therefore play a role in governing the total rate of fatty acid production. Possesses both acetoacetyl-ACP synthase and acetyl transacylase activities. Its substrate specificity determines the biosynthesis of branched-chain and/or straight-chain of fatty acids. The sequence is that of Beta-ketoacyl-[acyl-carrier-protein] synthase III from Clostridium tetani (strain Massachusetts / E88).